A 283-amino-acid chain; its full sequence is Tetrahydroxynaphthalene reductase (283 aa).

The disordered stretch occupies residues 1–21 (MPAVTQPRGESKYDAIPGPLG). Residue 39-63 (RGIGREMAMELGRRGCKVIVNYANS) participates in NADP(+) binding. Ser164 serves as a coordination point for substrate. Tyr178 functions as the Proton acceptor in the catalytic mechanism.

It belongs to the short-chain dehydrogenases/reductases (SDR) family. In terms of assembly, homotetramer.

It catalyses the reaction scytalone + NADP(+) = naphthalene-1,3,6,8-tetrol + NADPH + H(+). It functions in the pathway pigment biosynthesis; melanin biosynthesis. Catalyzes the NADPH-dependent reduction of 1,3,6,8-tetrahydroxynaphthalene (T4HN) into (+)-scytalone and 1,3,8-trihydroxynaphthalene into (-)-vermelone. This enzyme is the biochemical target of several commercially important fungicides which are used to prevent blast disease in rice plants. The sequence is that of Tetrahydroxynaphthalene reductase from Pyricularia oryzae (strain 70-15 / ATCC MYA-4617 / FGSC 8958) (Rice blast fungus).